The chain runs to 118 residues: Large ribosomal subunit protein bL20 (118 aa).

Belongs to the bacterial ribosomal protein bL20 family.

In terms of biological role, binds directly to 23S ribosomal RNA and is necessary for the in vitro assembly process of the 50S ribosomal subunit. It is not involved in the protein synthesizing functions of that subunit. This Edwardsiella ictaluri (strain 93-146) protein is Large ribosomal subunit protein bL20.